Here is a 313-residue protein sequence, read N- to C-terminus: MNTFSQVWVFSDTPSRLPELMNGAQALANQINTFVLNDADGAQAIQLGANHVWKLSGKPDDRMIEDYADVMADTIRQHGADGLVLLPNTRRGKLLAAKLGYRLNAAVSNDASAVSVQDGKATVKHMVYGGLAIGEERIATPYAVLTISSGTFDVAQPDASRTGETHTVEWQAPAVAITRTATQARQSNSVDLDKARLVVSVGRGIGSKENIALAEQLCKAIGAELACSRPVAENEKWMEHERYVGISNLMLKPELYLAVGISGQIQHMVGANASQTIFAINKDKNAPIFQFADYGIVGDAVKILPALTAALAR.

Position 255–283 (255–283 (LYLAVGISGQIQHMVGANASQTIFAINKD)) interacts with FAD.

Belongs to the ETF alpha-subunit/FixB family. Heterodimer of FixA and FixB.

It participates in amine and polyamine metabolism; carnitine metabolism. Required for anaerobic carnitine reduction. May bring reductant to CaiA. This is Protein FixB from Escherichia coli O127:H6 (strain E2348/69 / EPEC).